We begin with the raw amino-acid sequence, 368 residues long: Chaperone protein DnaJ (368 aa).

The 66-residue stretch at 5–70 folds into the J domain; that stretch reads DYYEVLGVSK…EKRSMYDRMG (66 aa). The CR-type zinc finger occupies 132 to 210; sequence GVKKTITFTA…CHGSGVADRQ (79 aa). Zn(2+) is bound by residues C145, C148, C162, C165, C184, C187, C198, and C201. CXXCXGXG motif repeat units lie at residues 145–152, 162–169, 184–191, and 198–205; these read CEVCDGKG, CRTCHGTG, CGTCRGQG, and CQSCHGSG. The disordered stretch occupies residues 349–368; sequence DGDEHSSSPKKKSFFDRLFD. A compositionally biased stretch (basic and acidic residues) spans 350–368; it reads GDEHSSSPKKKSFFDRLFD.

This sequence belongs to the DnaJ family. Homodimer. Requires Zn(2+) as cofactor.

Its subcellular location is the cytoplasm. Participates actively in the response to hyperosmotic and heat shock by preventing the aggregation of stress-denatured proteins and by disaggregating proteins, also in an autonomous, DnaK-independent fashion. Unfolded proteins bind initially to DnaJ; upon interaction with the DnaJ-bound protein, DnaK hydrolyzes its bound ATP, resulting in the formation of a stable complex. GrpE releases ADP from DnaK; ATP binding to DnaK triggers the release of the substrate protein, thus completing the reaction cycle. Several rounds of ATP-dependent interactions between DnaJ, DnaK and GrpE are required for fully efficient folding. Also involved, together with DnaK and GrpE, in the DNA replication of plasmids through activation of initiation proteins. The protein is Chaperone protein DnaJ of Acinetobacter baylyi (strain ATCC 33305 / BD413 / ADP1).